The following is a 298-amino-acid chain: MTYFTIKSAAMSPDDDAPSPDINSLGRLMSHSEVESRGNGYEVLQQAGTVRILLSRPERGNALSLSLARDLTRLFQTFSAQHSVHRIVLTGKGKYFCSGMDLGEELYEDATERCLALQDLFGAIDACPKTTIAVINGPAFGGGVGLAFVCDIRVAVSTSFFCLSEVKLGLCPATVSRFIVREWGVSLARMAMLTARKIQPQTLHEMGVLHAVALDEEALEAVTRDVLNDLRFAAPQATAWCKVLTRKTRNANSDHDQLARQIFEAMVVAGSESEYGVAQFRLGNKNICWEQVECRHIG.

Belongs to the enoyl-CoA hydratase/isomerase family.

Its pathway is mycotoxin biosynthesis. Enoyl-CoA hydratase; part of the gene clusters that mediate the biosynthesis of the host-selective toxins (HSTs) ACT-toxins responsible for brown spot of tangerine disease by the tangerine pathotype which affects tangerines and mandarins. ACT-toxins consist of three moieties, 9,10-epoxy-8-hydroxy-9-methyl-decatrienoic acid (EDA), valine and a polyketide. ACT-toxin I is toxic to both citrus and pear; toxin II the 5''-deoxy derivative of ACT-toxin I, is highly toxic to pear and slightly toxic to citrus. On cellular level, ACT-toxins affect plasma membrane of susceptible cells and cause a sudden increase in loss of K(+) after a few minutes of toxin treatment. The acyl-CoA ligase ACTT1, the hydrolase ACTT2, the enoyl-CoA hydratases ACTT3 and ACTT6, and the acyl-CoA synthetase ACTT5 are all involved in the biosynthesis of the AK-, AF- and ACT-toxin common 9,10-epoxy-8-hydroxy-9-methyl-decatrienoic acid (EDA) structural moiety. The exact role of each enzyme, and of additional enzymes identified within the AF-toxin clusters have still to be determined. On the other hand, ACTTS1 to ACTTS4 are specific to the tangerine pathotype. The function of ACTTS3 is to elongate the polyketide chain portion of ACT-toxin that is unique to this toxin. The enoyl-reductase ACTTS2 might complement the missing enoyl-reductase (ER) domain in ACTTS3 in the synthesis of the polyketide portion of ACT-toxin. The roles of the nonribosomal peptide synthetases-related proteins ACTTS1 and ACTTS4 have also still not been elucidated. The protein is Enoyl-CoA hydratase ACTT6 of Alternaria alternata (Alternaria rot fungus).